Here is a 534-residue protein sequence, read N- to C-terminus: UDP-glucuronosyltransferase 1A4 (534 aa).

Positions 1 to 28 (MARGLQVPLPRLATGLLLLLSVQPWAES) are cleaved as a signal peptide. 4 N-linked (GlcNAc...) asparagine glycosylation sites follow: Asn-119, Asn-142, Asn-296, and Asn-348. Residues 492-508 (VIGFLLAVVLTVAFITF) traverse the membrane as a helical segment.

Belongs to the UDP-glycosyltransferase family. In terms of assembly, homodimer. Homooligomer. Interacts with UGT1A1, UGT1A3, UGT1A6, UGT1A7, UGT1A8, UGT1A9 and UGT1A10 to form heterodimers. Isoform 1 interacts with isoform 2/i2 suggesting that oligomerization is involved in negative regulation of transferase activity by isoform 2. Isoform 1 also interacts with respective i2 isoforms of UGT1A1, UGT1A3, UGT1A6, UGT1A7, UGT1A8, UGT1A9 and UGT1A10. Expressed in liver. Expressed in kidney, colon and small intestine. Not expressed in esophagus. Not expressed in skin. In terms of tissue distribution, expressed in liver, kidney, colon, esophagus and small intestine.

Its subcellular location is the endoplasmic reticulum membrane. The catalysed reaction is glucuronate acceptor + UDP-alpha-D-glucuronate = acceptor beta-D-glucuronoside + UDP + H(+). The enzyme catalyses calcidiol + UDP-alpha-D-glucuronate = calcidiol 25-O-(beta-D-glucuronide) + UDP + H(+). It carries out the reaction calcidiol + UDP-alpha-D-glucuronate = calcidiol 3-O-(beta-D-glucuronide) + UDP + H(+). It catalyses the reaction calcitriol + UDP-alpha-D-glucuronate = calcitriol 25-O-(beta-D-glucuronide) + UDP + H(+). The catalysed reaction is (5Z,8Z,11Z,14Z)-eicosatetraenoate + UDP-alpha-D-glucuronate = O-[(5Z),(8Z),(11Z),(14Z)-eicosatetraenoyl]-beta-D-glucuronate + UDP. The enzyme catalyses 15-hydroxy-(5Z,8Z,11Z,13E)-eicosatetraenoate + UDP-alpha-D-glucuronate = 15-O-(beta-D-glucuronosyl)-(5Z,8Z,11Z,14Z)-eicosatetraenoate + UDP + H(+). It carries out the reaction 20-hydroxy-(5Z,8Z,11Z,14Z)-eicosatetraenoate + UDP-alpha-D-glucuronate = 20-O-(beta-D-glucuronosyl)-(5Z,8Z,11Z,14Z)-eicosatetraenoate + UDP + H(+). UDP-glucuronosyltransferase (UGT) that catalyzes phase II biotransformation reactions in which lipophilic substrates are conjugated with glucuronic acid to increase the metabolite's water solubility, thereby facilitating excretion into either the urine or bile. Essential for the elimination and detoxification of drugs, xenobiotics and endogenous compounds. Involved in the glucuronidation of calcidiol, which is the major circulating form of vitamin D3 essential for the regulation of calcium and phosphate homeostasis. Also glucuronidates the biologically active form of vitamin D3, calcitriol, probably leading to its biliary transport and intestinal reabsorption. Involved in the glucuronidation of arachidonic acid (AA) and AA-derived eicosanoids including 15-HETE, 20-HETE and PGB1. Functionally, lacks UDP-glucuronosyltransferase (UGT) activity but acts as a negative regulator of isoform 1. In Homo sapiens (Human), this protein is UDP-glucuronosyltransferase 1A4.